Consider the following 298-residue polypeptide: Dihydrodipicolinate reductase-like protein CRR1, chloroplastic (298 aa).

The N-terminal 25 residues, 1–25 (MAAVNCHFFQLSRHLKPSRPSFSCS), are a transit peptide targeting the chloroplast. NAD(+) is bound at residue 160–163 (APTL).

It belongs to the DapB family. Expressed specifically in leaves.

It is found in the plastid. The protein resides in the chloroplast stroma. Dihydrodipicolinate reductase (DHPR)-like protein that may not function as DHPR in lysine biosynthesis. Required for both formation and activity of the chloroplast NAD(P)H dehydrogenase (NDH) complex of the photosynthetic electron transport chain. May function in assembly or stabilization of the NDH complex. In Arabidopsis thaliana (Mouse-ear cress), this protein is Dihydrodipicolinate reductase-like protein CRR1, chloroplastic.